The following is a 232-amino-acid chain: Phosphatidylserine decarboxylase proenzyme (232 aa).

Serine 190 serves as the catalytic Schiff-base intermediate with substrate; via pyruvic acid. Residue serine 190 is modified to Pyruvic acid (Ser); by autocatalysis.

Belongs to the phosphatidylserine decarboxylase family. PSD-A subfamily. Heterodimer of a large membrane-associated beta subunit and a small pyruvoyl-containing alpha subunit. The cofactor is pyruvate. Is synthesized initially as an inactive proenzyme. Formation of the active enzyme involves a self-maturation process in which the active site pyruvoyl group is generated from an internal serine residue via an autocatalytic post-translational modification. Two non-identical subunits are generated from the proenzyme in this reaction, and the pyruvate is formed at the N-terminus of the alpha chain, which is derived from the carboxyl end of the proenzyme. The post-translation cleavage follows an unusual pathway, termed non-hydrolytic serinolysis, in which the side chain hydroxyl group of the serine supplies its oxygen atom to form the C-terminus of the beta chain, while the remainder of the serine residue undergoes an oxidative deamination to produce ammonia and the pyruvoyl prosthetic group on the alpha chain.

The protein localises to the cell membrane. The catalysed reaction is a 1,2-diacyl-sn-glycero-3-phospho-L-serine + H(+) = a 1,2-diacyl-sn-glycero-3-phosphoethanolamine + CO2. The protein operates within phospholipid metabolism; phosphatidylethanolamine biosynthesis; phosphatidylethanolamine from CDP-diacylglycerol: step 2/2. Functionally, catalyzes the formation of phosphatidylethanolamine (PtdEtn) from phosphatidylserine (PtdSer). The polypeptide is Phosphatidylserine decarboxylase proenzyme (Rhodopseudomonas palustris (strain TIE-1)).